A 276-amino-acid chain; its full sequence is Putative pyruvate, phosphate dikinase regulatory protein 1 (276 aa).

An ADP-binding site is contributed by 150–157 (GLPRTSKT).

It belongs to the pyruvate, phosphate/water dikinase regulatory protein family. PDRP subfamily.

It catalyses the reaction N(tele)-phospho-L-histidyl/L-threonyl-[pyruvate, phosphate dikinase] + ADP = N(tele)-phospho-L-histidyl/O-phospho-L-threonyl-[pyruvate, phosphate dikinase] + AMP + H(+). The enzyme catalyses N(tele)-phospho-L-histidyl/O-phospho-L-threonyl-[pyruvate, phosphate dikinase] + phosphate + H(+) = N(tele)-phospho-L-histidyl/L-threonyl-[pyruvate, phosphate dikinase] + diphosphate. In terms of biological role, bifunctional serine/threonine kinase and phosphorylase involved in the regulation of the pyruvate, phosphate dikinase (PPDK) by catalyzing its phosphorylation/dephosphorylation. In Syntrophomonas wolfei subsp. wolfei (strain DSM 2245B / Goettingen), this protein is Putative pyruvate, phosphate dikinase regulatory protein 1.